We begin with the raw amino-acid sequence, 109 residues long: Putative double-stranded DNA mimic protein KPK_2119 (109 aa).

The protein belongs to the putative dsDNA mimic protein family.

May act as a double-stranded DNA (dsDNA) mimic. Probably regulates the activity of a dsDNA-binding protein. This Klebsiella pneumoniae (strain 342) protein is Putative double-stranded DNA mimic protein KPK_2119.